The primary structure comprises 47 residues: Conotoxin Cal6.18 (47 aa).

An N-terminal signal peptide occupies residues M1–A19.

This sequence belongs to the conotoxin O1 superfamily. May contain 3 disulfide bonds. Expressed by the venom duct.

The protein resides in the secreted. Functionally, probable neurotoxin. The sequence is that of Conotoxin Cal6.18 from Californiconus californicus (California cone).